Reading from the N-terminus, the 1106-residue chain is Carbamoyl phosphate synthase large chain (1106 aa).

A carboxyphosphate synthetic domain region spans residues 1–402 (MPKREDLKSV…ALQKALRSLE (402 aa)). 12 residues coordinate ATP: arginine 129, arginine 169, glycine 175, glycine 176, glutamate 208, isoleucine 210, glutamate 215, glycine 241, valine 242, histidine 243, glutamine 285, and glutamate 299. Residues 133-328 (KGVVERCGAE…IAKIATKLSL (196 aa)) form the ATP-grasp 1 domain. Positions 285, 299, and 301 each coordinate Mg(2+). Residues glutamine 285, glutamate 299, and asparagine 301 each contribute to the Mn(2+) site. An oligomerization domain region spans residues 403 to 546 (QKGSQLDFGS…YHYSSYDQED (144 aa)). Residues 547–956 (EIALHEKPSV…AFAKSQAAAN (410 aa)) form a carbamoyl phosphate synthetic domain region. The ATP-grasp 2 domain occupies 677 to 868 (ARVLDIAGLI…LAKAAALIGT (192 aa)). ATP is bound by residues arginine 713, arginine 752, leucine 754, glutamate 759, glycine 784, isoleucine 785, histidine 786, serine 787, glutamine 827, and glutamate 839. Residues glutamine 827, glutamate 839, and asparagine 841 each contribute to the Mg(2+) site. Residues glutamine 827, glutamate 839, and asparagine 841 each contribute to the Mn(2+) site. Residues 957 to 1106 (NALPTEGKVF…EALLEAAANV (150 aa)) form the MGS-like domain. The allosteric domain stretch occupies residues 957–1106 (NALPTEGKVF…EALLEAAANV (150 aa)).

The protein belongs to the CarB family. As to quaternary structure, composed of two chains; the small (or glutamine) chain promotes the hydrolysis of glutamine to ammonia, which is used by the large (or ammonia) chain to synthesize carbamoyl phosphate. Tetramer of heterodimers (alpha,beta)4. Mg(2+) serves as cofactor. The cofactor is Mn(2+).

It catalyses the reaction hydrogencarbonate + L-glutamine + 2 ATP + H2O = carbamoyl phosphate + L-glutamate + 2 ADP + phosphate + 2 H(+). The catalysed reaction is hydrogencarbonate + NH4(+) + 2 ATP = carbamoyl phosphate + 2 ADP + phosphate + 2 H(+). Its pathway is amino-acid biosynthesis; L-arginine biosynthesis; carbamoyl phosphate from bicarbonate: step 1/1. It functions in the pathway pyrimidine metabolism; UMP biosynthesis via de novo pathway; (S)-dihydroorotate from bicarbonate: step 1/3. In terms of biological role, large subunit of the glutamine-dependent carbamoyl phosphate synthetase (CPSase). CPSase catalyzes the formation of carbamoyl phosphate from the ammonia moiety of glutamine, carbonate, and phosphate donated by ATP, constituting the first step of 2 biosynthetic pathways, one leading to arginine and/or urea and the other to pyrimidine nucleotides. The large subunit (synthetase) binds the substrates ammonia (free or transferred from glutamine from the small subunit), hydrogencarbonate and ATP and carries out an ATP-coupled ligase reaction, activating hydrogencarbonate by forming carboxy phosphate which reacts with ammonia to form carbamoyl phosphate. The polypeptide is Carbamoyl phosphate synthase large chain (Renibacterium salmoninarum (strain ATCC 33209 / DSM 20767 / JCM 11484 / NBRC 15589 / NCIMB 2235)).